The chain runs to 119 residues: Neuropeptide B (119 aa).

The signal sequence occupies residues 1-21 (MVRCRTLVAAALALLLTPALA). A propeptide spanning residues 53-119 (SESPALRVGT…SLHKAECQSA (67 aa)) is cleaved from the precursor.

This sequence belongs to the neuropeptide B/W family. As to expression, detected in a variety of tissues. High levels are found in the lymphoid organs, central nervous system, mammary gland and uterus.

Its subcellular location is the secreted. May be involved in the regulation of feeding, neuroendocrine system, memory and learning. May be involved in the afferent pain pathway. In Rattus norvegicus (Rat), this protein is Neuropeptide B (Npb).